A 128-amino-acid polypeptide reads, in one-letter code: Transcription antitermination protein NusB (128 aa).

This sequence belongs to the NusB family.

Functionally, involved in transcription antitermination. Required for transcription of ribosomal RNA (rRNA) genes. Binds specifically to the boxA antiterminator sequence of the ribosomal RNA (rrn) operons. This is Transcription antitermination protein NusB from Listeria monocytogenes serotype 4b (strain CLIP80459).